Reading from the N-terminus, the 122-residue chain is Large ribosomal subunit protein uL14 (122 aa).

It belongs to the universal ribosomal protein uL14 family. In terms of assembly, part of the 50S ribosomal subunit. Forms a cluster with proteins L3 and L19. In the 70S ribosome, L14 and L19 interact and together make contacts with the 16S rRNA in bridges B5 and B8.

Functionally, binds to 23S rRNA. Forms part of two intersubunit bridges in the 70S ribosome. The protein is Large ribosomal subunit protein uL14 of Burkholderia vietnamiensis (strain G4 / LMG 22486) (Burkholderia cepacia (strain R1808)).